We begin with the raw amino-acid sequence, 407 residues long: Phosphopentomutase (407 aa).

Mn(2+) is bound by residues Asp-10, Asp-306, His-311, Asp-347, His-348, and His-359.

Belongs to the phosphopentomutase family. Mn(2+) is required as a cofactor.

The protein resides in the cytoplasm. The catalysed reaction is 2-deoxy-alpha-D-ribose 1-phosphate = 2-deoxy-D-ribose 5-phosphate. The enzyme catalyses alpha-D-ribose 1-phosphate = D-ribose 5-phosphate. The protein operates within carbohydrate degradation; 2-deoxy-D-ribose 1-phosphate degradation; D-glyceraldehyde 3-phosphate and acetaldehyde from 2-deoxy-alpha-D-ribose 1-phosphate: step 1/2. Functionally, isomerase that catalyzes the conversion of deoxy-ribose 1-phosphate (dRib-1-P) and ribose 1-phosphate (Rib-1-P) to deoxy-ribose 5-phosphate (dRib-5-P) and ribose 5-phosphate (Rib-5-P), respectively. This Salmonella paratyphi A (strain AKU_12601) protein is Phosphopentomutase.